The primary structure comprises 813 residues: Valine--tRNA ligase (813 aa).

Positions 46 to 56 match the 'HIGH' region motif; sequence PTVSGQLHIGH. A 'KMSKS' region motif is present at residues 536 to 540; sequence KMSKS. Lys-539 lines the ATP pocket.

This sequence belongs to the class-I aminoacyl-tRNA synthetase family. ValS type 2 subfamily. Monomer.

Its subcellular location is the cytoplasm. It catalyses the reaction tRNA(Val) + L-valine + ATP = L-valyl-tRNA(Val) + AMP + diphosphate. In terms of biological role, catalyzes the attachment of valine to tRNA(Val). As ValRS can inadvertently accommodate and process structurally similar amino acids such as threonine, to avoid such errors, it has a 'posttransfer' editing activity that hydrolyzes mischarged Thr-tRNA(Val) in a tRNA-dependent manner. In Rickettsia canadensis (strain McKiel), this protein is Valine--tRNA ligase.